We begin with the raw amino-acid sequence, 1150 residues long: ATP-dependent helicase/deoxyribonuclease subunit B (1150 aa).

8 to 15 contributes to the ATP binding site; sequence GRAGSGKS. C786, C1106, C1109, and C1115 together coordinate [4Fe-4S] cluster.

This sequence belongs to the helicase family. AddB/RexB type 1 subfamily. As to quaternary structure, heterodimer of AddA and AddB. The cofactor is Mg(2+). Requires [4Fe-4S] cluster as cofactor.

Functionally, the heterodimer acts as both an ATP-dependent DNA helicase and an ATP-dependent, dual-direction single-stranded exonuclease. Recognizes the chi site generating a DNA molecule suitable for the initiation of homologous recombination. The AddB subunit has 5' -&gt; 3' nuclease activity but not helicase activity. The chain is ATP-dependent helicase/deoxyribonuclease subunit B from Clostridium botulinum (strain Hall / ATCC 3502 / NCTC 13319 / Type A).